A 564-amino-acid polypeptide reads, in one-letter code: 2-succinyl-5-enolpyruvyl-6-hydroxy-3-cyclohexene-1-carboxylate synthase (564 aa).

Belongs to the TPP enzyme family. MenD subfamily. In terms of assembly, homodimer. Mg(2+) is required as a cofactor. The cofactor is Mn(2+). Thiamine diphosphate serves as cofactor.

The catalysed reaction is isochorismate + 2-oxoglutarate + H(+) = 5-enolpyruvoyl-6-hydroxy-2-succinyl-cyclohex-3-ene-1-carboxylate + CO2. The protein operates within quinol/quinone metabolism; 1,4-dihydroxy-2-naphthoate biosynthesis; 1,4-dihydroxy-2-naphthoate from chorismate: step 2/7. Its pathway is quinol/quinone metabolism; menaquinone biosynthesis. Catalyzes the thiamine diphosphate-dependent decarboxylation of 2-oxoglutarate and the subsequent addition of the resulting succinic semialdehyde-thiamine pyrophosphate anion to isochorismate to yield 2-succinyl-5-enolpyruvyl-6-hydroxy-3-cyclohexene-1-carboxylate (SEPHCHC). In Vibrio vulnificus (strain CMCP6), this protein is 2-succinyl-5-enolpyruvyl-6-hydroxy-3-cyclohexene-1-carboxylate synthase.